Consider the following 257-residue polypeptide: Acetylglutamate kinase (257 aa).

Substrate-binding positions include 43-44 (GG), R65, and N157.

This sequence belongs to the acetylglutamate kinase family. ArgB subfamily.

Its subcellular location is the cytoplasm. It carries out the reaction N-acetyl-L-glutamate + ATP = N-acetyl-L-glutamyl 5-phosphate + ADP. It participates in amino-acid biosynthesis; L-arginine biosynthesis; N(2)-acetyl-L-ornithine from L-glutamate: step 2/4. Catalyzes the ATP-dependent phosphorylation of N-acetyl-L-glutamate. This chain is Acetylglutamate kinase, found in Pasteurella multocida (strain Pm70).